Here is a 450-residue protein sequence, read N- to C-terminus: Gastrin/cholecystokinin type B receptor (450 aa).

The Extracellular portion of the chain corresponds to Met-1–Arg-57. 3 N-linked (GlcNAc...) asparagine glycosylation sites follow: Asn-7, Asn-30, and Asn-36. The chain crosses the membrane as a helical span at residues Ile-58 to Leu-79. Over Gly-80–Thr-87 the chain is Cytoplasmic. A helical transmembrane segment spans residues Val-88–Pro-109. Topologically, residues Phe-110–Ser-131 are extracellular. Cys-127 and Cys-205 are disulfide-bonded. A helical transmembrane segment spans residues Tyr-132 to Leu-150. Over Glu-151–His-170 the chain is Cytoplasmic. A helical membrane pass occupies residues Ala-171–Tyr-189. The Extracellular segment spans residues Pro-190–Ser-219. The chain crosses the membrane as a helical span at residues Val-220–Ser-242. The Cytoplasmic portion of the chain corresponds to Arg-243–Arg-336. The tract at residues Asp-258 to Pro-277 is disordered. Residues Met-337–Trp-358 traverse the membrane as a helical segment. The Extracellular portion of the chain corresponds to Cys-359–Ser-376. A helical transmembrane segment spans residues Phe-377–His-397. At Arg-398 to Gly-450 the chain is on the cytoplasmic side. Cys-411 carries S-palmitoyl cysteine lipidation.

Belongs to the G-protein coupled receptor 1 family. As to expression, stomach and brain.

It is found in the cell membrane. Receptor for gastrin and cholecystokinin. The CCK-B receptors occur throughout the central nervous system where they modulate anxiety, analgesia, arousal, and neuroleptic activity. This receptor mediates its action by association with G proteins that activate a phosphatidylinositol-calcium second messenger system. This is Gastrin/cholecystokinin type B receptor (CCKBR) from Mastomys natalensis (African soft-furred rat).